We begin with the raw amino-acid sequence, 325 residues long: Phage-like element PBSX protein XkdQ (325 aa).

To B.subtilis YqbQ.

The protein is Phage-like element PBSX protein XkdQ (xkdQ) of Bacillus subtilis (strain 168).